A 79-amino-acid polypeptide reads, in one-letter code: UPF0180 protein BCG9842_B3897 (79 aa).

The protein belongs to the UPF0180 family.

This Bacillus cereus (strain G9842) protein is UPF0180 protein BCG9842_B3897.